The chain runs to 300 residues: GTPase Era (300 aa).

One can recognise an Era-type G domain in the interval 4 to 172; the sequence is KSGFVALIGR…LEKIKKLLPE (169 aa). The interval 12-19 is G1; it reads GRPNVGKS. 12-19 contacts GTP; it reads GRPNVGKS. A G2 region spans residues 38–42; it reads QTTRN. A G3 region spans residues 59 to 62; the sequence is DTPG. GTP is bound by residues 59 to 63 and 122 to 125; these read DTPGV and NKAD. Residues 122–125 form a G4 region; sequence NKAD. Residues 151-153 are G5; that stretch reads IAA. One can recognise a KH type-2 domain in the interval 195–281; sequence IREKILLNLS…NLQLWVKVKK (87 aa).

This sequence belongs to the TRAFAC class TrmE-Era-EngA-EngB-Septin-like GTPase superfamily. Era GTPase family. Monomer.

The protein resides in the cytoplasm. It localises to the cell membrane. In terms of biological role, an essential GTPase that binds both GDP and GTP, with rapid nucleotide exchange. Plays a role in 16S rRNA processing and 30S ribosomal subunit biogenesis and possibly also in cell cycle regulation and energy metabolism. The polypeptide is GTPase Era (Caldicellulosiruptor saccharolyticus (strain ATCC 43494 / DSM 8903 / Tp8T 6331)).